A 284-amino-acid chain; its full sequence is Aldo-keto reductase MAV_3816 (284 aa).

The active-site Proton donor is the Tyr59. Positions 199, 237, 239, 240, 241, 248, and 275 each coordinate NADPH.

Belongs to the aldo/keto reductase family.

This Mycobacterium avium (strain 104) protein is Aldo-keto reductase MAV_3816.